A 254-amino-acid chain; its full sequence is Large ribosomal subunit protein uL15m (254 aa).

The transit peptide at 1-78 directs the protein to the mitochondrion; the sequence is MFNILSRVCR…GSGQRRGRRI (78 aa). The tract at residues 44–104 is disordered; sequence NYQSKKRVGR…KVGHSTGHLK (61 aa). Positions 64 to 79 are enriched in basic residues; it reads GRGHKGSGQRRGRRIK.

Belongs to the universal ribosomal protein uL15 family. In terms of assembly, component of the mitochondrial large ribosomal subunit (mt-LSU). Mature yeast 74S mitochondrial ribosomes consist of a small (37S) and a large (54S) subunit. The 37S small subunit contains a 15S ribosomal RNA (15S mt-rRNA) and at least 32 different proteins. The 54S large subunit contains a 21S rRNA (21S mt-rRNA) and at least 45 different proteins.

The protein resides in the mitochondrion. Its function is as follows. Component of the mitochondrial ribosome (mitoribosome), a dedicated translation machinery responsible for the synthesis of mitochondrial genome-encoded proteins, including at least some of the essential transmembrane subunits of the mitochondrial respiratory chain. The mitoribosomes are attached to the mitochondrial inner membrane and translation products are cotranslationally integrated into the membrane. In Schizosaccharomyces pombe (strain 972 / ATCC 24843) (Fission yeast), this protein is Large ribosomal subunit protein uL15m (mrpl10).